The chain runs to 104 residues: L-rhamnose mutarotase (104 aa).

Y18 is a binding site for substrate. The Proton donor role is filled by H22. Residues Y41 and 76-77 (WW) each bind substrate.

Belongs to the rhamnose mutarotase family. Homodimer.

Its subcellular location is the cytoplasm. The catalysed reaction is alpha-L-rhamnose = beta-L-rhamnose. It functions in the pathway carbohydrate metabolism; L-rhamnose metabolism. Functionally, L-rhamnose mutarotase involved in ulvan degradation. Ulvan is the main polysaccharide component of the Ulvales (green seaweed) cell wall. It is composed of disaccharide building blocks comprising 3-sulfated rhamnose (Rha3S) linked to D-glucuronic acid (GlcA), L-iduronic acid (IduA), or D-xylose (Xyl). L-rhamnose mutarotase catalyzes the anomeric conversion of alpha- to beta-L-rhamnose. This Formosa agariphila (strain DSM 15362 / KCTC 12365 / LMG 23005 / KMM 3901 / M-2Alg 35-1) protein is L-rhamnose mutarotase (rhaM).